Here is a 596-residue protein sequence, read N- to C-terminus: Proline--tRNA ligase (596 aa).

The protein belongs to the class-II aminoacyl-tRNA synthetase family. ProS type 1 subfamily. In terms of assembly, homodimer.

The protein localises to the cytoplasm. It catalyses the reaction tRNA(Pro) + L-proline + ATP = L-prolyl-tRNA(Pro) + AMP + diphosphate. Functionally, catalyzes the attachment of proline to tRNA(Pro) in a two-step reaction: proline is first activated by ATP to form Pro-AMP and then transferred to the acceptor end of tRNA(Pro). As ProRS can inadvertently accommodate and process non-cognate amino acids such as alanine and cysteine, to avoid such errors it has two additional distinct editing activities against alanine. One activity is designated as 'pretransfer' editing and involves the tRNA(Pro)-independent hydrolysis of activated Ala-AMP. The other activity is designated 'posttransfer' editing and involves deacylation of mischarged Ala-tRNA(Pro). The misacylated Cys-tRNA(Pro) is not edited by ProRS. This chain is Proline--tRNA ligase, found in Prochlorococcus marinus (strain NATL2A).